Consider the following 340-residue polypeptide: Insulin gene enhancer protein ISL-2B (340 aa).

2 LIM zinc-binding domains span residues cysteine 9 to aspartate 62 and cysteine 71 to histidine 125. Positions threonine 172–threonine 231 form a DNA-binding region, homeobox. Residues glutamate 307–serine 317 show a composition bias toward low complexity. Residues glutamate 307 to threonine 340 are disordered. The span at aspartate 318–threonine 340 shows a compositional bias: polar residues.

Its subcellular location is the nucleus. Functionally, binds to one of the cis-acting domain of the insulin gene enhancer. May be involved in subtype specialization of primary motoneurons. The polypeptide is Insulin gene enhancer protein ISL-2B (isl2b) (Oncorhynchus tshawytscha (Chinook salmon)).